We begin with the raw amino-acid sequence, 202 residues long: Peptidyl-tRNA hydrolase (202 aa).

Tyrosine 14 contacts tRNA. Histidine 19 serves as the catalytic Proton acceptor. TRNA contacts are provided by tyrosine 64, asparagine 66, and asparagine 112.

It belongs to the PTH family. Monomer.

The protein resides in the cytoplasm. The enzyme catalyses an N-acyl-L-alpha-aminoacyl-tRNA + H2O = an N-acyl-L-amino acid + a tRNA + H(+). Hydrolyzes ribosome-free peptidyl-tRNAs (with 1 or more amino acids incorporated), which drop off the ribosome during protein synthesis, or as a result of ribosome stalling. Its function is as follows. Catalyzes the release of premature peptidyl moieties from peptidyl-tRNA molecules trapped in stalled 50S ribosomal subunits, and thus maintains levels of free tRNAs and 50S ribosomes. The polypeptide is Peptidyl-tRNA hydrolase (Xanthobacter autotrophicus (strain ATCC BAA-1158 / Py2)).